We begin with the raw amino-acid sequence, 504 residues long: Porphyrin biosynthesis protein HemD (504 aa).

Residues 1–248 (MEHGFVALVG…LSEKFSWFMK (248 aa)) are uroporphyrinogen-III C-methyltransferase. Residues 249 to 504 (KPLFGTKILV…LEIGGGNIYD (256 aa)) form a uroporphyrinogen-III synthase region.

This sequence in the N-terminal section; belongs to the precorrin methyltransferase family. It in the C-terminal section; belongs to the uroporphyrinogen-III synthase family.

The enzyme catalyses uroporphyrinogen III + 2 S-adenosyl-L-methionine = precorrin-2 + 2 S-adenosyl-L-homocysteine + H(+). It catalyses the reaction hydroxymethylbilane = uroporphyrinogen III + H2O. Its pathway is cofactor biosynthesis; adenosylcobalamin biosynthesis; precorrin-2 from uroporphyrinogen III: step 1/1. The protein operates within porphyrin-containing compound metabolism; siroheme biosynthesis; precorrin-2 from uroporphyrinogen III: step 1/1. Functionally, may catalyze sequential reactions to synthesize uroporphyrinogen III from hydroxymethylbilane (HMB) and then precorrin-2, which are intermediate compounds in both vitamin B12 and siroheme biosyntheses. The chain is Porphyrin biosynthesis protein HemD (hemD) from Ruminiclostridium josui (Clostridium josui).